A 751-amino-acid chain; its full sequence is Pyridoxal-dependent decarboxylase domain-containing protein 1 (751 aa).

Residues 659–751 are disordered; it reads QMRKEDSPDS…QEAESVETIR (93 aa). Polar residues predominate over residues 690–702; sequence DSISETSSVSQLE. The span at 720 to 729 shows a compositional bias: basic and acidic residues; that stretch reads PQERPAHILE. Residues 742–751 are compositionally biased toward acidic residues; it reads QEAESVETIR.

It belongs to the group II decarboxylase family. Pyridoxal 5'-phosphate serves as cofactor.

In Danio rerio (Zebrafish), this protein is Pyridoxal-dependent decarboxylase domain-containing protein 1 (pdxdc1).